Reading from the N-terminus, the 338-residue chain is Protein WVD2-like 2 (338 aa).

Residues 1 to 14 (MGRELVDKHMDKKA) are compositionally biased toward basic and acidic residues. The segment at 1 to 150 (MGRELVDKHM…SFSVASSSAT (150 aa)) is disordered. Polar residues-rich tracts occupy residues 15 to 37 (NSLT…STNE) and 59 to 69 (QGITETPGSHK). Low complexity predominate over residues 100-115 (NNSLGNGASHNSSSAS). Over residues 128–138 (RIPDHKMHHDE) the composition is skewed to basic and acidic residues. Residues 177–214 (REFYQKLEEKQKALEAEKRENEKRLKEEQEAVTKQLRK) are a coiled coil. The tract at residues 222-338 (PVPSFYQEGP…GENGVGVVEE (117 aa)) is disordered. Residues 288–300 (TNSVPRTPNSSSK) show a composition bias toward polar residues.

Belongs to the TPX2 family. As to expression, expressed in seedlings.

It localises to the cytoplasm. It is found in the cytoskeleton. Microtubule-associated protein (MAP) that regulates the orientation of interphase cortical microtubules. This Arabidopsis thaliana (Mouse-ear cress) protein is Protein WVD2-like 2.